Consider the following 152-residue polypeptide: Protein-export protein SecB (152 aa).

This sequence belongs to the SecB family. Homotetramer, a dimer of dimers. One homotetramer interacts with 1 SecA dimer.

The protein localises to the cytoplasm. Functionally, one of the proteins required for the normal export of preproteins out of the cell cytoplasm. It is a molecular chaperone that binds to a subset of precursor proteins, maintaining them in a translocation-competent state. It also specifically binds to its receptor SecA. This chain is Protein-export protein SecB, found in Verminephrobacter eiseniae (strain EF01-2).